The following is a 457-amino-acid chain: Cell division protein FtsZ (457 aa).

GTP contacts are provided by residues 26-30 (GGGGN), 115-117 (GTG), glutamate 146, lysine 150, and aspartate 193. The segment covering 429-447 (KKDVVRSEESERPAFESER) has biased composition (basic and acidic residues). The segment at 429–457 (KKDVVRSEESERPAFESERSSSPTTISFN) is disordered. A compositionally biased stretch (polar residues) spans 448–457 (SSSPTTISFN).

The protein belongs to the FtsZ family. In terms of assembly, homodimer. Polymerizes to form a dynamic ring structure in a strictly GTP-dependent manner. Interacts directly with several other division proteins.

The protein localises to the cytoplasm. In terms of biological role, essential cell division protein that forms a contractile ring structure (Z ring) at the future cell division site. The regulation of the ring assembly controls the timing and the location of cell division. One of the functions of the FtsZ ring is to recruit other cell division proteins to the septum to produce a new cell wall between the dividing cells. Binds GTP and shows GTPase activity. This chain is Cell division protein FtsZ, found in Porphyromonas gingivalis (strain ATCC BAA-308 / W83).